The following is a 441-amino-acid chain: GTPase Der (441 aa).

EngA-type G domains lie at 3-167 (PLIA…PKGS) and 176-351 (TKIA…EQFA). GTP contacts are provided by residues 9 to 16 (GRPNVGKS), 56 to 60 (DTGGF), 119 to 122 (NKID), 182 to 189 (GRPNVGKS), 229 to 233 (DTAGI), and 294 to 297 (NKWD). The 85-residue stretch at 352–436 (RRITTSDLNR…PMRLLFKGRE (85 aa)) folds into the KH-like domain.

Belongs to the TRAFAC class TrmE-Era-EngA-EngB-Septin-like GTPase superfamily. EngA (Der) GTPase family. Associates with the 50S ribosomal subunit.

Functionally, GTPase that plays an essential role in the late steps of ribosome biogenesis. The polypeptide is GTPase Der (Geotalea uraniireducens (strain Rf4) (Geobacter uraniireducens)).